The primary structure comprises 361 residues: 3-dehydroquinate synthase (361 aa).

NAD(+)-binding positions include 72–77 (SGEKEK), 130–131 (TT), lysine 142, and lysine 151. Glutamate 184, histidine 247, and histidine 264 together coordinate Zn(2+).

This sequence belongs to the sugar phosphate cyclases superfamily. Dehydroquinate synthase family. Requires Co(2+) as cofactor. Zn(2+) is required as a cofactor. NAD(+) serves as cofactor.

It localises to the cytoplasm. It catalyses the reaction 7-phospho-2-dehydro-3-deoxy-D-arabino-heptonate = 3-dehydroquinate + phosphate. Its pathway is metabolic intermediate biosynthesis; chorismate biosynthesis; chorismate from D-erythrose 4-phosphate and phosphoenolpyruvate: step 2/7. Catalyzes the conversion of 3-deoxy-D-arabino-heptulosonate 7-phosphate (DAHP) to dehydroquinate (DHQ). In Bacillus cereus (strain G9842), this protein is 3-dehydroquinate synthase.